A 925-amino-acid polypeptide reads, in one-letter code: Glutamate receptor 3.1 (925 aa).

Residues 1 to 25 form the signal peptide; it reads MLSSMNWVLLSFIIVLGGGLLLSEG. Residues 26-591 lie on the Extracellular side of the membrane; it reads ASSSRPPVIK…NPWAFLRPFT (566 aa). N-linked (GlcNAc...) asparagine glycans are attached at residues Asn-309, Asn-341, Asn-359, Asn-419, Asn-437, and Asn-488. The helical transmembrane segment at 592-612 threads the bilayer; the sequence is LPMWAVTASFFVIVGAAIWIL. The Cytoplasmic portion of the chain corresponds to 613–621; sequence EHRINDEFR. The helical transmembrane segment at 622 to 642 threads the bilayer; that stretch reads GPPRRQIITILWFTFSTMFFS. Residues 643 to 653 lie on the Cytoplasmic side of the membrane; the sequence is HRETTVSTLGR. The chain crosses the membrane as a helical span at residues 654–674; that stretch reads MVLLIWLFVVLIITSSYTASL. At 675-831 the chain is on the extracellular side; it reads TSILTVQQLN…GDSEQLNVHS (157 aa). N-linked (GlcNAc...) asparagine glycosylation is found at Asn-738 and Asn-812. Residues 832–852 form a helical membrane-spanning segment; the sequence is FWGMFLVVGIACLVALFIHFF. Residues 853 to 925 are Cytoplasmic-facing; the sequence is KIIRDFCKDT…ISRTASRRPI (73 aa). Residues 897-925 are disordered; that stretch reads KRRLKRKRNNDHSMNANSIISRTASRRPI. Over residues 908–919 the composition is skewed to polar residues; it reads HSMNANSIISRT.

The protein belongs to the glutamate-gated ion channel (TC 1.A.10.1) family. As to quaternary structure, may form heteromers. As to expression, expressed predominantly in roots. Firt detected in the vascular tissues of the cotyledons, and later in the vasculature of all organs. In leaves, preferentially expressed in guard cells.

The protein localises to the membrane. Glutamate-gated receptor that probably acts as a non-selective cation channel. May be involved in light-signal transduction and calcium homeostasis via the regulation of calcium influx into cells. Required for the long-term calcium oscillation-regulated stomatal movements. This Arabidopsis thaliana (Mouse-ear cress) protein is Glutamate receptor 3.1 (GLR3.1).